The primary structure comprises 118 residues: HTH-type transcriptional regulator CmtR (118 aa).

One can recognise an HTH arsR-type domain in the interval 3 to 97 (TCEMRESALA…ELVQVVLAVD (95 aa)). Residues cysteine 57, cysteine 61, and cysteine 102 each coordinate Cd(2+).

As to quaternary structure, homodimer.

Its function is as follows. Metal-responsive transcriptional repressor for the cmt operon. Binding of cadmium or lead causes the repressor to dissociate from the DNA. The protein is HTH-type transcriptional regulator CmtR (cmtR) of Mycobacterium bovis (strain ATCC BAA-935 / AF2122/97).